We begin with the raw amino-acid sequence, 184 residues long: Fungal defensin copsin (184 aa).

Positions 1–23 (MKLSTSLLAIVAVASTFIGNALS) are cleaved as a signal peptide. Positions 24 to 127 (ATTVPGCFAE…LGRVLPVEKR (104 aa)) are excised as a propeptide. Pyrrolidone carboxylic acid is present on Gln-128. 6 cysteine pairs are disulfide-bonded: Cys-130–Cys-159, Cys-137–Cys-167, Cys-145–Cys-175, Cys-149–Cys-177, Cys-152–Cys-184, and Cys-162–Cys-181.

It belongs to the invertebrate defensin family. In terms of processing, contains a unique connectivity of 6 cysteine bonds in contrast to most other CS-alpha-beta defensins which are linked by 3 or 4 disulfide bonds. Disulfide bonds are essential for structural integrity and antibacterial activity, since activity is lost after treatment with reducing agents. Thanks to disulfide bonds and N-terminal pyroglutamate, the protein is extremely stable in a wide pH and temperature range and insensitive toward proteases.

The protein resides in the secreted. The protein localises to the target cell membrane. Its function is as follows. Antimicrobial peptide that acts against Gram-positive bacteria (Listeria spp., Enterococcus spp., B.subtilis, B.anthracis, P.aeruginosa). Is not active against Gram-negative bacteria. It selectively inhibits peptidoglycan biosynthesis through complex formation with the cell wall precursor lipid II (1:1 molar ratio), probably anchoring lipid II to the membrane, thus inhibiting cell wall synthesis. The interaction with lipid II involves the third position of the pentapeptide. Shows bactericidal activity at about 2-fold minimal inhibitory concentrations (MIC), but does not form pore across the membrane. The chain is Fungal defensin copsin from Coprinopsis cinerea (Inky cap fungus).